The following is a 491-amino-acid chain: MSSSLASRRSSSSSAAKRPAAGEGGGKAAAGAAAAKKRVALGNITNVAAAANNAKFNSATWAAPVKKGSLASGRNVGTNRVSAVKSASTKPASAISRHESAPQKESVLPPKVLRIVPTAAPAPVTVPCSSFVSPMHSGDSVSVDETMSTCDSMKSPDFEYIDNGDSSSVLGSLQRRANENLRISEDRDVEETKWKKDAPSPMEIDQICDVDNNYEDPQLCATLASDIYMHLREAETRKHPSTDFMETLQKDVNPSMRAILIDWLVEVAEEYRLVPDTLYLTVNYIDRYLSGNEINRQRLQLLGVACMLIAAKYKEICAPQVEEFCYITDNTYFRDEVLEMEASVLNYLKFEMTAPTAKCFLRRFVRVAQVSDEDPALHLEFLANYVAELSLLEYNLLSYPPSLVAASAIFLAKFILQPAKHPWNSTLAHYTQYKSSELSDCVKALHRLFCVGPGSNLPAIREKYTQHKYKFVAKKPCPPSIPTEFFRDSTC.

The span at 1–21 shows a compositional bias: low complexity; it reads MSSSLASRRSSSSSAAKRPAA. 2 disordered regions span residues 1-32 and 69-106; these read MSSS…AAGA and SLAS…QKES. Residues 75 to 91 show a composition bias toward polar residues; that stretch reads NVGTNRVSAVKSASTKP.

The protein belongs to the cyclin family. Cyclin AB subfamily.

In Oryza sativa subsp. japonica (Rice), this protein is Cyclin-A1-3 (CYCA1-3).